The primary structure comprises 588 residues: Retrograde regulation protein 2 (588 aa).

Belongs to the GppA/Ppx family.

Required for a novel path of interorganelle communication between mitochondria, peroxisomes and the nucleus, thereby maintaining a functional metabolic interaction between the tricarboxylic acid and glyoxylate cycles. In particular, required for the retrograde expression of the peroxisomal isoform of citrate synthase, CIT2. This Saccharomyces cerevisiae (strain ATCC 204508 / S288c) (Baker's yeast) protein is Retrograde regulation protein 2 (RTG2).